We begin with the raw amino-acid sequence, 522 residues long: L-tyrosine/L-DOPA decarboxylase 2 (522 aa).

Repeat copies occupy residues Lys75 to Glu132 and Val135 to His186. Residues Lys75–His186 form a 2 X approximate tandem repeats region. Pyridoxal 5'-phosphate is bound by residues Thr163, Cys164, Thr258, and Asn312. N6-(pyridoxal phosphate)lysine is present on Lys315.

Belongs to the group II decarboxylase family. Pyridoxal 5'-phosphate is required as a cofactor. In terms of tissue distribution, strongly expressed in all tissues, particularly in thick roots.

The enzyme catalyses L-tyrosine + H(+) = tyramine + CO2. It catalyses the reaction L-dopa + H(+) = dopamine + CO2. It participates in aromatic compound metabolism. The protein operates within alkaloid biosynthesis. In terms of biological role, aromatic amino acid decarboxylase participating in the biosynthesis of natural products derived from phenylethylamine, including mescaline, a natural hallucinogen potentially used in psychotherapeutic treatments. Catalyzes the decarboxylation of L-tyrosine and L-DOPA. The sequence is that of L-tyrosine/L-DOPA decarboxylase 2 from Lophophora williamsii (Peyote).